Reading from the N-terminus, the 361-residue chain is Peptide chain release factor 1 (361 aa).

Position 236 is an N5-methylglutamine (Q236). Basic and acidic residues predominate over residues 285–309; the sequence is TAKDSARAADRKAQVGSGDRSERIR. The segment at 285–311 is disordered; the sequence is TAKDSARAADRKAQVGSGDRSERIRTY.

This sequence belongs to the prokaryotic/mitochondrial release factor family. In terms of processing, methylated by PrmC. Methylation increases the termination efficiency of RF1.

It is found in the cytoplasm. Its function is as follows. Peptide chain release factor 1 directs the termination of translation in response to the peptide chain termination codons UAG and UAA. This chain is Peptide chain release factor 1, found in Methylorubrum extorquens (strain CM4 / NCIMB 13688) (Methylobacterium extorquens).